The sequence spans 160 residues: Serine-protein kinase RsbW (160 aa).

The protein belongs to the anti-sigma-factor family.

The enzyme catalyses L-seryl-[protein] + ATP = O-phospho-L-seryl-[protein] + ADP + H(+). The catalysed reaction is L-threonyl-[protein] + ATP = O-phospho-L-threonyl-[protein] + ADP + H(+). Functionally, negative regulator of sigma-B activity. Phosphorylates and inactivates its specific antagonist protein, RsbV. Upon phosphorylation of RsbV, RsbW is released and binds to sigma-B, thereby blocking its ability to form an RNA polymerase holoenzyme (E-sigma-B). The protein is Serine-protein kinase RsbW of Bacillus anthracis (strain A0248).